The following is a 623-amino-acid chain: MATEHVNGNGTEEPMDTTSAVIHSENFQTLLDAGLPQKVAEKLDEIYVAGLVAHSDLDERAIEALKEFNEDGALAVLQQFKDSDLSHVQNKSAFLCGVMKTYRQREKQGTKVADSSKGPDEAKIKALLERTGYTLDVTTGQRKYGGPPPDSVYSGQQPSVGTEIFVGKIPRDLFEDELVPLFEKAGPIWDLRLMMDPLTGLNRGYAFVTFCTKEAAQEAVKLYNNHEIRSGKHIGVCISVANNRLFVGSIPKSKTKEQILEEFSKVTEGLTDVILYHQPDDKKKNRGFCFLEYEDHKTAAQARRRLMSGKVKVWGNVGTVEWADPIEDPDPEVMAKVKVLFVRNLANTVTEEILEKAFSQFGKLERVKKLKDYAFIHFDERDGAVKAMEEMNGKDLEGENIEIVFAKPPDQKRKERKAQRQAAKNQMYDDYYYYGPPHMPPPTRGRGRGGRGGYGYPPDYYGYEDYYDYYGYDYHNYRGGYEDPYYGYEDFQVGARGRGGRGARGAAPSRGRGAAPPRGRAGYSQRGGPGSARGVRGARGGAQQQRGRGVRGARGGRGGNVGGKRKADGYNQPDSKRRQTNNQNWGSQPIAQQPLQGGDHSGNYGYKSENQEFYQDTFGQQWK.

An N-acetylalanine modification is found at Ala-2. A Phosphoserine modification is found at Ser-159. RRM domains follow at residues 162–241 (TEIF…ISVA), 243–325 (NRLF…WADP), and 338–408 (KVLF…FAKP). Residue Lys-168 forms a Glycyl lysine isopeptide (Lys-Gly) (interchain with G-Cter in SUMO2) linkage. Lys-221 carries the post-translational modification N6-acetyllysine. Residue Lys-363 is modified to N6-acetyllysine. A Phosphotyrosine modification is found at Tyr-373. Residues 400–561 (NIEIVFAKPP…GARGGRGGNV (162 aa)) are interaction with APOBEC1. Arg-444 is modified (asymmetric dimethylarginine; by PRMT1; alternate). Arg-444 bears the Omega-N-methylarginine; by PRMT1; alternate mark. Repeat copies occupy residues 448–450 (RGG), 451–453 (RGG), 460–464 (YYGYE), 469–472 (YYGY), 478–480 (RGG), and 485–488 (YYGY). Positions 448-559 (RGGRGGYGYP…VRGARGGRGG (112 aa)) are 8 X 3 AA repeats of R-G-G. A 3 X 4 AA repeats of Y-Y-G-Y region spans residues 460–488 (YYGYEDYYDYYGYDYHNYRGGYEDPYYGY). Arg-496 carries the omega-N-methylarginine; by PRMT1 modification. The tract at residues 497–623 (GRGGRGARGA…YQDTFGQQWK (127 aa)) is disordered. A 1-4 repeat occupies 498–500 (RGG). The segment covering 504-522 (RGAAPSRGRGAAPPRGRAG) has biased composition (low complexity). Residue Arg-510 is modified to Asymmetric dimethylarginine; by PRMT1. An asymmetric dimethylarginine; by PRMT1; alternate mark is found at Arg-518, Arg-526, Arg-536, and Arg-539. An omega-N-methylarginine; by PRMT1; alternate mark is found at Arg-518, Arg-526, Arg-536, and Arg-539. Residues 518 to 549 (RGRAGYSQRGGPGSARGVRGARGGAQQQRGRG) are interaction with SMN. The 1-5 repeat unit spans residues 526 to 528 (RGG). 3 tandem repeats follow at residues 539–541 (RGG), 554–556 (RGG), and 557–559 (RGG). The span at 550–562 (VRGARGGRGGNVG) shows a compositional bias: gly residues. The short motif at 564-578 (KRKADGYNQPDSKRR) is the Bipartite nuclear localization signal element. Polar residues predominate over residues 580-595 (TNNQNWGSQPIAQQPL). Ser-587 bears the Phosphoserine mark. Residue Lys-607 forms a Glycyl lysine isopeptide (Lys-Gly) (interchain with G-Cter in SUMO2) linkage. Residues 611–623 (QEFYQDTFGQQWK) show a composition bias toward polar residues.

In terms of assembly, isoform 1 is a component of the APOB mRNA editosome complex and interacts with APOBEC1 and A1CF (APOBEC1 complementation factor). Part of a complex associated with the FOS mCRD domain and consisting of PABPC1, PAIP1, CSDE1/UNR, HNRPD and SYNCRIP. Isoform 3 interacts with HNRPR. Interacts with POLR2A hyperphosphorylated C-terminal domain. Isoform 1, isoform 2 and isoform 3 interact with SMN. Isoform 3 interacts through its C-terminal domain with SYT7, SYT8 and SYT9. The non-phosphorylated and phosphorylated forms are colocalized with PAIP1 in polysomes. Interacts with HABP4. Identified in a histone pre-mRNA complex, at least composed of ERI1, LSM11, SLBP, SNRPB, SYNCRIP and YBX1. Identified in the spliceosome C complex. Component of the coding region determinant (CRD)-mediated complex, composed of DHX9, HNRNPU, IGF2BP1, SYNCRIP and YBX1. Identified in a mRNP complex, at least composed of DHX9, DDX3X, ELAVL1, HNRNPU, IGF2BP1, ILF3, PABPC1, PCBP2, PTBP2, STAU1, STAU2, SYNCRIP and YBX1. Identified in a mRNP granule complex, at least composed of ACTB, ACTN4, DHX9, ERG, HNRNPA1, HNRNPA2B1, HNRNPAB, HNRNPD, HNRNPL, HNRNPR, HNRNPU, HSPA1, HSPA8, IGF2BP1, ILF2, ILF3, NCBP1, NCL, PABPC1, PABPC4, PABPN1, RPLP0, RPS3, RPS3A, RPS4X, RPS8, RPS9, SYNCRIP, YBX1 and untranslated mRNAs. Interacts with GTPBP1. Component of the GAIT complex; in humans the complex assembly seems to be a two-step process in which EPRS1 first associates with SYNCRIP to form a pre-GAIT complex which is deficient in GAIT element binding. (Microbial infection) Interacts with minute virus of mice (MVM) NS1 protein. As to quaternary structure, (Microbial infection) Interacts with herpes virus 8/HHV-8 protein vIRF-1; this interaction induces ubiquitination and degradation of SYNCRIP. Post-translationally, phosphorylated on tyrosine. The membrane-bound form found in microsomes is phosphorylated in vitro by insulin receptor tyrosine kinase (INSR). Phosphorylation is inhibited upon binding to RNA, whereas the cytoplasmic form is poorly phosphorylated. Ubiquitously expressed. Detected in heart, brain, pancreas, placenta, spleen, lung, liver, skeletal muscle, kidney, thymus, prostate, uterus, small intestine, colon, peripheral blood and testis.

The protein localises to the cytoplasm. It is found in the microsome. It localises to the endoplasmic reticulum. Its subcellular location is the nucleus. The protein resides in the nucleoplasm. Its function is as follows. Heterogenous nuclear ribonucleoprotein (hnRNP) implicated in mRNA processing mechanisms. Component of the CRD-mediated complex that promotes MYC mRNA stability. Isoform 1, isoform 2 and isoform 3 are associated in vitro with pre-mRNA, splicing intermediates and mature mRNA protein complexes. Isoform 1 binds to apoB mRNA AU-rich sequences. Isoform 1 is part of the APOB mRNA editosome complex and may modulate the postranscriptional C to U RNA-editing of the APOB mRNA through either by binding to A1CF (APOBEC1 complementation factor), to APOBEC1 or to RNA itself. May be involved in translationally coupled mRNA turnover. Implicated with other RNA-binding proteins in the cytoplasmic deadenylation/translational and decay interplay of the FOS mRNA mediated by the major coding-region determinant of instability (mCRD) domain. Interacts in vitro preferentially with poly(A) and poly(U) RNA sequences. Isoform 3 may be involved in cytoplasmic vesicle-based mRNA transport through interaction with synaptotagmins. Component of the GAIT (gamma interferon-activated inhibitor of translation) complex which mediates interferon-gamma-induced transcript-selective translation inhibition in inflammation processes. Upon interferon-gamma activation assembles into the GAIT complex which binds to stem loop-containing GAIT elements in the 3'-UTR of diverse inflammatory mRNAs (such as ceruplasmin) and suppresses their translation; seems not to be essential for GAIT complex function. In Homo sapiens (Human), this protein is Heterogeneous nuclear ribonucleoprotein Q (SYNCRIP).